A 65-amino-acid polypeptide reads, in one-letter code: Large ribosomal subunit protein uL30 (65 aa).

The protein belongs to the universal ribosomal protein uL30 family. Part of the 50S ribosomal subunit.

The polypeptide is Large ribosomal subunit protein uL30 (Chloroflexus aurantiacus (strain ATCC 29366 / DSM 635 / J-10-fl)).